The sequence spans 370 residues: Alanine racemase (370 aa).

Lys36 (proton acceptor; specific for D-alanine) is an active-site residue. Position 36 is an N6-(pyridoxal phosphate)lysine (Lys36). Arg134 provides a ligand contact to substrate. Residue Tyr265 is the Proton acceptor; specific for L-alanine of the active site. Met313 lines the substrate pocket.

The protein belongs to the alanine racemase family. Pyridoxal 5'-phosphate serves as cofactor.

The enzyme catalyses L-alanine = D-alanine. It participates in amino-acid biosynthesis; D-alanine biosynthesis; D-alanine from L-alanine: step 1/1. Catalyzes the interconversion of L-alanine and D-alanine. May also act on other amino acids. In Desulforamulus reducens (strain ATCC BAA-1160 / DSM 100696 / MI-1) (Desulfotomaculum reducens), this protein is Alanine racemase (alr).